The sequence spans 270 residues: Non-structural maintenance of chromosomes element 1 homolog (270 aa).

Residues 185–226 (CNVCHKIAIQCQLCENCGIPLHLQCAGIYFRGIANPLCPNCK) form an RING-type; atypical zinc finger. Residues 236–270 (LSQVSSQGPSHSQAAPVRGRNQRSRNISTVARTSR) form a disordered region. Polar residues-rich tracts occupy residues 237 to 248 (SQVSSQGPSHSQ) and 259 to 270 (SRNISTVARTSR).

It belongs to the NSE1 family. As to quaternary structure, component of the SMC5-SMC6 complex.

It is found in the nucleus. It localises to the chromosome. The protein localises to the telomere. The enzyme catalyses S-ubiquitinyl-[E2 ubiquitin-conjugating enzyme]-L-cysteine + [acceptor protein]-L-lysine = [E2 ubiquitin-conjugating enzyme]-L-cysteine + N(6)-ubiquitinyl-[acceptor protein]-L-lysine.. Functionally, RING-type zinc finger-containing E3 ubiquitin ligase that assembles with melanoma antigen protein (MAGE) to catalyze the direct transfer of ubiquitin from E2 ubiquitin-conjugating enzyme to a specific substrate. Within MAGE-RING ubiquitin ligase complex, MAGE stimulates and specifies ubiquitin ligase activity likely through recruitment and/or stabilization of the E2 ubiquitin-conjugating enzyme at the E3:substrate complex. Involved in maintenance of genome integrity, DNA damage response and DNA repair. This chain is Non-structural maintenance of chromosomes element 1 homolog (nsmce1), found in Xenopus tropicalis (Western clawed frog).